A 157-amino-acid polypeptide reads, in one-letter code: MSYKQYFDSLPLKLKSFFQRYPPSIKYSPVSTSTKAINANPFLPNKHPVTQRFHDPKYSLRRMSDVYKLALRYGVEEFLPPIENTKKLFFEEKYNKKTLMKGVLLPKGHKHELKLNEKLKKREEALKKVDELIASKKGSKYAKRVEKMKKNQSIGWF.

The protein belongs to the mitochondrion-specific ribosomal protein mL59 family. As to quaternary structure, component of the mitochondrial large ribosomal subunit (mt-LSU). Mature yeast 74S mitochondrial ribosomes consist of a small (37S) and a large (54S) subunit. The 37S small subunit contains a 15S ribosomal RNA (15S mt-rRNA) and 34 different proteins. The 54S large subunit contains a 21S rRNA (21S mt-rRNA) and 46 different proteins.

The protein localises to the mitochondrion. Its function is as follows. Component of the mitochondrial ribosome (mitoribosome), a dedicated translation machinery responsible for the synthesis of mitochondrial genome-encoded proteins, including at least some of the essential transmembrane subunits of the mitochondrial respiratory chain. The mitoribosomes are attached to the mitochondrial inner membrane and translation products are cotranslationally integrated into the membrane. This chain is Large ribosomal subunit protein mL59 (MRPL25), found in Saccharomyces cerevisiae (strain ATCC 204508 / S288c) (Baker's yeast).